Consider the following 306-residue polypeptide: Plant-type L-asparaginase (306 aa).

The active-site Nucleophile is the T176. Residues R203–D206 and T225–G228 contribute to the substrate site.

It belongs to the Ntn-hydrolase family. As to quaternary structure, heterotetramer of two alpha and two beta chains arranged as a dimer of alpha/beta heterodimers. The uncleaved protein forms homodimers. Autocleaved. Generates the alpha and beta subunits. The N-terminal residue of the beta subunit is thought to be responsible for the nucleophile hydrolase activity. Predominantly produced in the uncleaved form when gene expression is induced at 37 degrees Celsius with 0.5 mM IPTG. When produced at 42 degrees Celsius without adding IPTG, approximately 90% of the protein is found in the cleaved form, while the remaining 10% is observed as uncleaved precursor. Undergoes complete auto-cleavage within 24 hours at 37 degrees Celsius.

The enzyme catalyses L-asparagine + H2O = L-aspartate + NH4(+). Undergoes auto-cleavage in a temperature-dependent and glycine-independent manner. Metal ions and EDTA do not have any significant effect on enzyme activity, indicating that activity is metal-independent. Catalyzes the hydrolysis of L-asparagine into L-aspartate and ammonia. Also displays D-asparaginase activity, which is about 10% of the L-asparaginase activity. Does not exhibit glutaminase activity. In Thermococcus kodakarensis (strain ATCC BAA-918 / JCM 12380 / KOD1) (Pyrococcus kodakaraensis (strain KOD1)), this protein is Plant-type L-asparaginase.